The primary structure comprises 787 residues: Signal transducer and activator of transcription 5B (787 aa).

Residue Y90 is modified to Phosphotyrosine. Residue S128 is modified to Phosphoserine. One can recognise an SH2 domain in the interval 589 to 686; the sequence is WNDGAILGFV…EVYSKYYTPV (98 aa). Y682 carries the phosphotyrosine modification. Y699 carries the post-translational modification Phosphotyrosine; by HCK, JAK and PTK6.

The protein belongs to the transcription factor STAT family. Upon activation, forms a homodimer or a heterodimer with a related family member. Binds NR3C1. Interacts with NCOA1. Interacts with NMI. Interacts with SOCS7. Interacts (via SH2 domain) with INSR. Interacts with CPEB3; this inhibits STAT5B-mediated transcriptional activation. Post-translationally, tyrosine phosphorylated in response to signaling via activated KIT, resulting in translocation to the nucleus. Tyrosine phosphorylated in response to signaling via activated FLT3; wild-type FLT3 results in much weaker phosphorylation than constitutively activated mutant FLT3. Alternatively, can be phosphorylated by JAK2. Phosphorylation at Tyr-699 by PTK6 or HCK leads to an increase of its transcriptional activity.

The protein localises to the cytoplasm. The protein resides in the nucleus. Functionally, carries out a dual function: signal transduction and activation of transcription. Mediates cellular responses to the cytokine KITLG/SCF and other growth factors. Binds to the GAS element and activates PRL-induced transcription. Positively regulates hematopoietic/erythroid differentiation. The protein is Signal transducer and activator of transcription 5B (STAT5B) of Bos taurus (Bovine).